Reading from the N-terminus, the 1226-residue chain is Receptor-type tyrosine-protein phosphatase O (1226 aa).

Positions 1–29 (MGHLPRGTLGGRRLLPLLGLFVLLKIVTT) are cleaved as a signal peptide. One can recognise a Fibronectin type-III 1 domain in the interval 30–115 (FHVAVQDDNN…TKPSRSITVL (86 aa)). Residues 30–832 (FHVAVQDDNN…VTEVNPNVVV (803 aa)) are Extracellular-facing. N-linked (GlcNAc...) asparagine glycans are attached at residues Asn75, Asn154, and Asn227. Residues 242–305 (EPSGSFPEDS…PNSTDYESTS (64 aa)) are disordered. A compositionally biased stretch (basic and acidic residues) spans 260–270 (IGRDRRFHFPE). A compositionally biased stretch (low complexity) spans 277–291 (PSNVSSGSPPSNVSS). A glycan (N-linked (GlcNAc...) asparagine) is linked at Asn279. Residues 296-305 (PNSTDYESTS) are compositionally biased toward polar residues. Fibronectin type-III domains lie at 339–435 (RTEK…ISPT), 445–541 (KPQH…IVPT), 542–638 (GIKD…TISF), 641–734 (APVA…LEPA), and 735–827 (PPKS…TEVN). Asn471 and Asn500 each carry an N-linked (GlcNAc...) asparagine glycan. 3 N-linked (GlcNAc...) asparagine glycosylation sites follow: Asn710, Asn743, and Asn800. The helical transmembrane segment at 833 to 853 (ISVLAILSTLLIGLLLVTLVI) threads the bilayer. At 854-1226 (LRKKHLQMAR…DVIYENVSKS (373 aa)) the chain is on the cytoplasmic side. Ser875 is modified (phosphoserine). The Tyrosine-protein phosphatase domain maps to 948 to 1205 (FSLQFEELKL…IFIHQCVQLM (258 aa)). Residues Asp1112, 1146–1152 (CSAGVGR), and Gln1190 contribute to the substrate site. Cys1146 serves as the catalytic Phosphocysteine intermediate. Tyr1220 bears the Phosphotyrosine mark.

It belongs to the protein-tyrosine phosphatase family. Receptor class 3 subfamily. As to quaternary structure, interacts (phosphorylated form) with FYN and GRB2.

Its subcellular location is the membrane. The enzyme catalyses O-phospho-L-tyrosyl-[protein] + H2O = L-tyrosyl-[protein] + phosphate. Functionally, possesses tyrosine phosphatase activity. Plays a role in regulating the glomerular pressure/filtration rate relationship through an effect on podocyte structure and function. The chain is Receptor-type tyrosine-protein phosphatase O (Ptpro) from Mus musculus (Mouse).